A 338-amino-acid chain; its full sequence is Heat-inducible transcription repressor HrcA (338 aa).

The protein belongs to the HrcA family.

Functionally, negative regulator of class I heat shock genes (grpE-dnaK-dnaJ and groELS operons). Prevents heat-shock induction of these operons. The sequence is that of Heat-inducible transcription repressor HrcA from Thermotoga maritima (strain ATCC 43589 / DSM 3109 / JCM 10099 / NBRC 100826 / MSB8).